The primary structure comprises 3096 residues: Cilia- and flagella-associated protein 54 (3096 aa).

Positions 1–45 are enriched in low complexity; sequence MAAQGSPSSSPSDDSTTSGSLPELPPTSTATSRSPPESKGSSRSS. 2 disordered regions span residues 1–46 and 1248–1267; these read MAAQ…RSSL and SNEQ…LKTK.

It belongs to the CFAP54 family.

It localises to the cytoplasm. The protein localises to the cytoskeleton. Its subcellular location is the cilium axoneme. Functionally, required for assembly and function of cilia and flagella. The protein is Cilia- and flagella-associated protein 54 of Homo sapiens (Human).